We begin with the raw amino-acid sequence, 111 residues long: MALWGRSAYRQKTVTSRLTKHRHTSPLNLLNFFIFFSLHLCALFLATAVHYACFACFVLFRHAILLLFYLLARGRASQIQARQKVRCTGATFYRFLIISLSQRAWATKKPI.

The next 2 membrane-spanning stretches (helical) occupy residues Leu29–Val49 and Ala52–Ala72.

The protein resides in the membrane. This is an uncharacterized protein from Saccharomyces cerevisiae (strain ATCC 204508 / S288c) (Baker's yeast).